Consider the following 289-residue polypeptide: Probable endonuclease 4 (289 aa).

Zn(2+) contacts are provided by His-74, His-115, Glu-150, Asp-184, His-187, His-218, Asp-231, His-233, and Glu-263.

This sequence belongs to the AP endonuclease 2 family. Requires Zn(2+) as cofactor.

It carries out the reaction Endonucleolytic cleavage to 5'-phosphooligonucleotide end-products.. In terms of biological role, endonuclease IV plays a role in DNA repair. It cleaves phosphodiester bonds at apurinic or apyrimidinic (AP) sites, generating a 3'-hydroxyl group and a 5'-terminal sugar phosphate. This Mycoplasma mycoides subsp. mycoides SC (strain CCUG 32753 / NCTC 10114 / PG1) protein is Probable endonuclease 4.